We begin with the raw amino-acid sequence, 214 residues long: Transmembrane emp24 domain-containing protein p24delta10 (214 aa).

The first 24 residues, 1–24 (MFLQSQKLWTMLLILAIWSPISHS), serve as a signal peptide directing secretion. The Lumenal segment spans residues 25–181 (LHFDLHSGRT…QDLNRSTNTK (157 aa)). Positions 34–149 (TKCIAEDIKS…VEVMEFEVKS (116 aa)) constitute a GOLD domain. Residues 164 to 177 (LRDREEEMQDLNRS) adopt a coiled-coil conformation. The residue at position 167 (arginine 167) is an Omega-N-methylated arginine. Asparagine 175 carries N-linked (GlcNAc...) asparagine glycosylation. A helical transmembrane segment spans residues 182-202 (MAWLSVLSFFVCIGVAGMQFL). Over 203–214 (HLKTFFEKKKVI) the chain is Cytoplasmic. The short motif at 207–208 (FF) is the COPII vesicle coat-binding element. The short motif at 207 to 214 (FFEKKKVI) is the COPI vesicle coat-binding element.

Belongs to the EMP24/GP25L family. As to quaternary structure, probably oligomerizes with other members of the EMP24/GP25L family. Associates with the COPI vesicle coat (coatomer). Associates with the COPII vesicle coat (coatomer).

Its subcellular location is the endoplasmic reticulum membrane. It localises to the golgi apparatus. The protein resides in the cis-Golgi network membrane. The protein localises to the golgi stack membrane. Its function is as follows. Involved in vesicular protein trafficking. Mainly functions in the early secretory pathway. Thought to act as cargo receptor at the lumenal side for incorporation of secretory cargo molecules into transport vesicles and to be involved in vesicle coat formation at the cytoplasmic side. This Arabidopsis thaliana (Mouse-ear cress) protein is Transmembrane emp24 domain-containing protein p24delta10.